A 1193-amino-acid chain; its full sequence is DNA polymerase (1193 aa).

A disordered region spans residues Met1 to Val88. Low complexity predominate over residues Pro48–Pro68.

The protein belongs to the DNA polymerase type-B family. As to quaternary structure, heterodimer with the terminal protein; this heterodimer binds to bp 9 to 18 of the genome. Forms a complex with viral pTP, DBP and hosts NFIA and POU2F1/OCT1 for initiation of replication.

It is found in the host nucleus. It carries out the reaction DNA(n) + a 2'-deoxyribonucleoside 5'-triphosphate = DNA(n+1) + diphosphate. Functionally, eukaryotic-type DNA polymerase involved in viral genomic replication. DNA synthesis is protein primed, and acts in a strand displacement replication. Assembles in complex with viral pTP, DBP, host NFIA and host POU2F1/OCT1 on viral origin of replication. The polymerase covalently transfers dCMP onto pTP, thereby initiating complementary strand synthesis. The polypeptide is DNA polymerase (Homo sapiens (Human)).